We begin with the raw amino-acid sequence, 43 residues long: Bacteriocin weissellin-A (43 aa).

C9 and C14 are disulfide-bonded.

Its subcellular location is the secreted. Its function is as follows. Highly active against Gram-positive bacteria M.flavus strain ATCC 400, M.luteus strain CECT241, C.soprogenes strain NCTC533, L.monocytogenes strain ATCC 19111, L.inocua strain ATCC BAA-680D and S.carnosus strain LMG13564. Less active against B.cereus strain LMG13569, C.thiaminolyticum strain ATCC 15579, E.faecalis strain NCTC8176, L.lactis strain LM0230, L.casei strain ATCC 344, L.lactis strain IL1403, L.jensenii strain ATCC 25258, L.plantarum strain CECT220, L.brevis strain ATCC 8287, L.bulgaricus strain LMG13551, P.acidilactici strain ATCC 25740, P.pentosaceus strain ATCC 33316 and P.pentosaceus strain LMG13560. Weakly active against L.mesenteroides strain ATCC 19254, L.lactis strain ATCC 1454, L.sakei strain CECT906T, L.lactis subsp. cremoris strain MC1363 and L.curvatus strain ATCC 51436. Not active against Gram-negative bacterium S.enteritidis strain ATCC 13076. The mode of action appears to be non-lytic. Inactivated by proteinase K, but insensitive to trypsin, alpha-chymotrypsin, pepsin and papain. This Weissella paramesenteroides (Leuconostoc paramesenteroides) protein is Bacteriocin weissellin-A.